A 218-amino-acid polypeptide reads, in one-letter code: MIP18 family protein galla-1 (218 aa).

Residues 1–59 (MLSYIKRKLSESDSGVSSVATVTSSCGGDSGRAGGTGSSESGTGSSSASISGRSQNADE) are disordered. Residues 12–27 (SDSGVSSVATVTSSCG) are compositionally biased toward low complexity. Ser-14 carries the phosphoserine modification. The span at 28–37 (GDSGRAGGTG) shows a compositional bias: gly residues. Over residues 38 to 54 (SSESGTGSSSASISGRS) the composition is skewed to low complexity. At Ser-65 the chain carries Phosphoserine.

This sequence belongs to the MIP18 family. Component of the CGX complex composed of crb, galla (galla-1 or galla-2) and Xpd. Interacts with crb (via intracellular domain). Is not able to interact with Xpd in the absence of crb.

Its subcellular location is the apical cell membrane. It is found in the cytoplasm. The protein localises to the cytoskeleton. It localises to the spindle. In terms of biological role, component of the crb-galla-Xpd (CGX) complex which is essential for proper mitotic chromosome segregation in early embryos. The CGX complex is also required for cell proliferation in developing wing disks. In the CGX complex, acts with crb to recruit Xpd thus forming the functional complex. In Drosophila melanogaster (Fruit fly), this protein is MIP18 family protein galla-1.